We begin with the raw amino-acid sequence, 393 residues long: NAD(P)H-quinone oxidoreductase subunit H, chloroplastic (393 aa).

This sequence belongs to the complex I 49 kDa subunit family. In terms of assembly, NDH is composed of at least 16 different subunits, 5 of which are encoded in the nucleus.

The protein resides in the plastid. It localises to the chloroplast thylakoid membrane. The catalysed reaction is a plastoquinone + NADH + (n+1) H(+)(in) = a plastoquinol + NAD(+) + n H(+)(out). It catalyses the reaction a plastoquinone + NADPH + (n+1) H(+)(in) = a plastoquinol + NADP(+) + n H(+)(out). NDH shuttles electrons from NAD(P)H:plastoquinone, via FMN and iron-sulfur (Fe-S) centers, to quinones in the photosynthetic chain and possibly in a chloroplast respiratory chain. The immediate electron acceptor for the enzyme in this species is believed to be plastoquinone. Couples the redox reaction to proton translocation, and thus conserves the redox energy in a proton gradient. This Liriodendron tulipifera (Tuliptree) protein is NAD(P)H-quinone oxidoreductase subunit H, chloroplastic.